The following is a 66-amino-acid chain: FMRFamide-like neuropeptides 24 (66 aa).

An N-terminal signal peptide occupies residues 1–22 (MSRTSIILVLAIFVAIAAIAQC). Residues 23-48 (RNIQYDVDEISPEAAFRYAQWGEIPH) constitute a propeptide that is removed on maturation. Phenylalanine 61 carries the post-translational modification Phenylalanine amide. The propeptide occupies 65-66 (SV).

Belongs to the FARP (FMRFamide related peptide) family.

The protein localises to the secreted. FMRFamides and FMRFamide-like peptides are neuropeptides. This is FMRFamide-like neuropeptides 24 from Caenorhabditis briggsae.